Reading from the N-terminus, the 183-residue chain is MKSRLLFLGPPGAGKGTQAARLCNANGMSHLSTGDLLRSEVAAGTALGQEAEAVMNRGELVSDALVLAIVESQLKGLSSGGWLLDGFPRTVPQADALEPLLDELKQPIEAVVLLELDDAVLIERLLARGRDDDNEAVIRNRLEVYREKTSPLISFYRDKGLLVSVEANGSVEEITQRITKVLS.

12–17 provides a ligand contact to ATP; it reads GAGKGT. Positions 32-61 are NMP; that stretch reads STGDLLRSEVAAGTALGQEAEAVMNRGELV. Residues Thr33, Arg38, 59–61, 86–89, and Gln93 each bind AMP; these read ELV and GFPR. Residues 127–133 are LID; that stretch reads ARGRDDD. Arg128 lines the ATP pocket. AMP-binding residues include Arg130 and Arg141. Gly169 provides a ligand contact to ATP.

This sequence belongs to the adenylate kinase family. As to quaternary structure, monomer.

It localises to the cytoplasm. It catalyses the reaction AMP + ATP = 2 ADP. The protein operates within purine metabolism; AMP biosynthesis via salvage pathway; AMP from ADP: step 1/1. Catalyzes the reversible transfer of the terminal phosphate group between ATP and AMP. Plays an important role in cellular energy homeostasis and in adenine nucleotide metabolism. In Parasynechococcus marenigrum (strain WH8102), this protein is Adenylate kinase.